We begin with the raw amino-acid sequence, 234 residues long: Large ribosomal subunit protein uL1 (234 aa).

The protein belongs to the universal ribosomal protein uL1 family. In terms of assembly, part of the 50S ribosomal subunit.

Binds directly to 23S rRNA. The L1 stalk is quite mobile in the ribosome, and is involved in E site tRNA release. In terms of biological role, protein L1 is also a translational repressor protein, it controls the translation of the L11 operon by binding to its mRNA. This Wolinella succinogenes (strain ATCC 29543 / DSM 1740 / CCUG 13145 / JCM 31913 / LMG 7466 / NCTC 11488 / FDC 602W) (Vibrio succinogenes) protein is Large ribosomal subunit protein uL1.